The primary structure comprises 357 residues: 39 kDa FK506-binding nuclear protein (357 aa).

Phosphoserine is present on Ser92. A disordered region spans residues 113-251; the sequence is KNSKKSEDDE…ASKDPRTITG (139 aa). Residues 120-182 are compositionally biased toward acidic residues; that stretch reads DDEDENESGE…QDSDDSEAEE (63 aa). Phosphoserine is present on residues Ser193 and Ser197. Residues 222–237 are compositionally biased toward basic and acidic residues; that stretch reads EKPEAKKEQPKAKEPA. A PPIase FKBP-type domain is found at 269–357; the sequence is GKRVSVYYIG…VFEVELKAVH (89 aa).

Belongs to the FKBP-type PPIase family. Ubiquitously expressed, highest levels in ovary.

The protein localises to the nucleus. It carries out the reaction [protein]-peptidylproline (omega=180) = [protein]-peptidylproline (omega=0). PPIases accelerate the folding of proteins. May function in a signal transduction cascade during early development. In Drosophila melanogaster (Fruit fly), this protein is 39 kDa FK506-binding nuclear protein.